A 142-amino-acid polypeptide reads, in one-letter code: uncharacterized protein (142 aa).

Residues 1–20 (MPSVNEFFIFFLIVWHTCEC) form the signal peptide. Residue N80 is glycosylated (N-linked (GlcNAc...) asparagine).

This is an uncharacterized protein from Dictyostelium discoideum (Social amoeba).